A 726-amino-acid chain; its full sequence is Catalase-peroxidase (726 aa).

Residues Trp96–Tyr224 constitute a cross-link (tryptophyl-tyrosyl-methioninium (Trp-Tyr) (with M-250)). Catalysis depends on His97, which acts as the Proton acceptor. Residues Tyr224 to Met250 constitute a cross-link (tryptophyl-tyrosyl-methioninium (Tyr-Met) (with W-96)). Residue His265 participates in heme b binding.

This sequence belongs to the peroxidase family. Peroxidase/catalase subfamily. As to quaternary structure, homodimer or homotetramer. It depends on heme b as a cofactor. Formation of the three residue Trp-Tyr-Met cross-link is important for the catalase, but not the peroxidase activity of the enzyme.

The enzyme catalyses H2O2 + AH2 = A + 2 H2O. The catalysed reaction is 2 H2O2 = O2 + 2 H2O. Its function is as follows. Bifunctional enzyme with both catalase and broad-spectrum peroxidase activity. This Vibrio campbellii (strain ATCC BAA-1116) protein is Catalase-peroxidase.